We begin with the raw amino-acid sequence, 215 residues long: NADH-quinone oxidoreductase subunit C (215 aa).

Belongs to the complex I 30 kDa subunit family. As to quaternary structure, NDH-1 is composed of 14 different subunits. Subunits NuoB, C, D, E, F, and G constitute the peripheral sector of the complex.

The protein resides in the cell inner membrane. It catalyses the reaction a quinone + NADH + 5 H(+)(in) = a quinol + NAD(+) + 4 H(+)(out). Its function is as follows. NDH-1 shuttles electrons from NADH, via FMN and iron-sulfur (Fe-S) centers, to quinones in the respiratory chain. The immediate electron acceptor for the enzyme in this species is believed to be ubiquinone. Couples the redox reaction to proton translocation (for every two electrons transferred, four hydrogen ions are translocated across the cytoplasmic membrane), and thus conserves the redox energy in a proton gradient. The sequence is that of NADH-quinone oxidoreductase subunit C from Methylobacterium sp. (strain 4-46).